An 89-amino-acid chain; its full sequence is Small ribosomal subunit protein uS15 (89 aa).

Belongs to the universal ribosomal protein uS15 family. As to quaternary structure, part of the 30S ribosomal subunit. Forms a bridge to the 50S subunit in the 70S ribosome, contacting the 23S rRNA.

In terms of biological role, one of the primary rRNA binding proteins, it binds directly to 16S rRNA where it helps nucleate assembly of the platform of the 30S subunit by binding and bridging several RNA helices of the 16S rRNA. Functionally, forms an intersubunit bridge (bridge B4) with the 23S rRNA of the 50S subunit in the ribosome. This chain is Small ribosomal subunit protein uS15, found in Oleidesulfovibrio alaskensis (strain ATCC BAA-1058 / DSM 17464 / G20) (Desulfovibrio alaskensis).